Reading from the N-terminus, the 197-residue chain is Large ribosomal subunit protein bL25 (197 aa).

It belongs to the bacterial ribosomal protein bL25 family. CTC subfamily. As to quaternary structure, part of the 50S ribosomal subunit; part of the 5S rRNA/L5/L18/L25 subcomplex. Contacts the 5S rRNA. Binds to the 5S rRNA independently of L5 and L18.

This is one of the proteins that binds to the 5S RNA in the ribosome where it forms part of the central protuberance. This is Large ribosomal subunit protein bL25 from Streptomyces avermitilis (strain ATCC 31267 / DSM 46492 / JCM 5070 / NBRC 14893 / NCIMB 12804 / NRRL 8165 / MA-4680).